We begin with the raw amino-acid sequence, 303 residues long: Suppressor of silencing P0 (303 aa).

It belongs to the polerovirus P0 protein family.

In terms of biological role, suppressor of RNA-mediated gene silencing. The sequence is that of Suppressor of silencing P0 from Pea enation mosaic virus-1 (strain WSG) (PEMV-1).